Here is a 119-residue protein sequence, read N- to C-terminus: Multidrug resistance protein EbrB (119 aa).

4 consecutive transmembrane segments (helical) span residues 3–23 (GMIF…MLKL), 31–51 (LPAA…SFSL), 59–79 (AYAT…HFIF), and 81–101 (EPFN…VFLL).

The protein belongs to the drug/metabolite transporter (DMT) superfamily. Small multidrug resistance (SMR) (TC 2.A.7.1) family. EbrA/EbrB subfamily. The efflux pump is composed of EbrA and EbrB.

Its subcellular location is the cell membrane. Part of a multidrug efflux pump. Confers resistance to cationic lipophilic dyes such as ethidium bromide, acriflavine, pyronine Y and safranin O. The efflux is probably coupled to an influx of protons. This is Multidrug resistance protein EbrB (ebrB) from Bacillus licheniformis (strain ATCC 14580 / DSM 13 / JCM 2505 / CCUG 7422 / NBRC 12200 / NCIMB 9375 / NCTC 10341 / NRRL NRS-1264 / Gibson 46).